We begin with the raw amino-acid sequence, 1032 residues long: Connector enhancer of kinase suppressor of ras 2 (1032 aa).

The region spanning 11 to 76 is the SAM domain; sequence WSPSQVVDWM…LEAVDLLCAL (66 aa). Serine 12 carries the phosphoserine modification. The CRIC domain maps to 84–178; it reads NLKTLSHKLN…TIVQQDCTVY (95 aa). Positions 215 to 297 constitute a PDZ domain; sequence VIQLANIKPS…GVILTLKKRP (83 aa). The segment covering 324–340 has biased composition (low complexity); that stretch reads RSPTSSVATPSSTISTP. Residues 324 to 349 are disordered; it reads RSPTSSVATPSSTISTPTKRDSSALQ. The 184-residue stretch at 332 to 515 folds into the DUF1170 domain; sequence TPSSTISTPT…PTHYSLLPSL (184 aa). Phosphoserine is present on residues serine 338 and serine 390. The disordered stretch occupies residues 480–509; the sequence is EEYMFQRNSKKDTGKKSKKKGDKSTSPTHY. The region spanning 570–669 is the PH domain; it reads RGDCEGWLWK…WLNRINMLTA (100 aa). The tract at residues 682–766 is disordered; sequence DYWSESDKEE…PIRKTASQRR (85 aa). Position 683 is a phosphotyrosine (tyrosine 683). Acidic residues predominate over residues 683-693; that stretch reads YWSESDKEEAD. A phosphoserine mark is found at serine 685 and serine 687. The segment covering 701–714 has biased composition (pro residues); it reads DSPPPPYDTYPRPP. The span at 730-740 shows a compositional bias: low complexity; sequence LSSTETSQSQS. 2 positions are modified to phosphoserine: serine 756 and serine 767. The interval 866–900 is disordered; the sequence is DPQDDIQPPEVEEEEEEEEEEAAGENIGEKNENRE. Residues 874–917 adopt a coiled-coil conformation; the sequence is PEVEEEEEEEEEEAAGENIGEKNENREEKLGDSLQDLYRALEEA. Residues 875–888 show a composition bias toward acidic residues; sequence EVEEEEEEEEEEAA. Serine 906 bears the Phosphoserine mark.

The protein belongs to the CNKSR family. Interacts with RAF1, RAB2L and RAL GTPase proteins. Interacts with DLG4 and AIP1. In terms of processing, phosphorylated on tyrosine. Expressed in neurons and localized in the cell body and neurites.

Its subcellular location is the cytoplasm. It is found in the membrane. Functionally, may function as an adapter protein or regulator of Ras signaling pathways, in synaptic junctions. This chain is Connector enhancer of kinase suppressor of ras 2 (Cnksr2), found in Rattus norvegicus (Rat).